Consider the following 73-residue polypeptide: Large ribosomal subunit protein bL32c (73 aa).

It belongs to the bacterial ribosomal protein bL32 family.

It localises to the plastid. The protein localises to the chloroplast. The sequence is that of Large ribosomal subunit protein bL32c from Jasminum nudiflorum (Winter jasmine).